A 264-amino-acid polypeptide reads, in one-letter code: Tryptophan synthase alpha chain (264 aa).

Residues Glu-49 and Asp-60 each act as proton acceptor in the active site.

This sequence belongs to the TrpA family. As to quaternary structure, tetramer of two alpha and two beta chains.

It carries out the reaction (1S,2R)-1-C-(indol-3-yl)glycerol 3-phosphate + L-serine = D-glyceraldehyde 3-phosphate + L-tryptophan + H2O. It participates in amino-acid biosynthesis; L-tryptophan biosynthesis; L-tryptophan from chorismate: step 5/5. The alpha subunit is responsible for the aldol cleavage of indoleglycerol phosphate to indole and glyceraldehyde 3-phosphate. This chain is Tryptophan synthase alpha chain, found in Microcystis aeruginosa (strain NIES-843 / IAM M-2473).